A 353-amino-acid polypeptide reads, in one-letter code: Photosystem II protein D1 (353 aa).

The residue at position 2 (Thr2) is an N-acetylthreonine. Thr2 carries the post-translational modification Phosphothreonine. 3 helical membrane-spanning segments follow: residues Tyr29–Ser46, His118–Leu133, and Trp142–Ala156. His118 serves as a coordination point for chlorophyll a. Tyr126 contributes to the pheophytin a binding site. The [CaMn4O5] cluster site is built by Asp170 and Glu189. Residues Phe197–Leu218 traverse the membrane as a helical segment. His198 lines the chlorophyll a pocket. A quinone is bound by residues His215 and Ser264 to Phe265. Residue His215 participates in Fe cation binding. Residue His272 participates in Fe cation binding. Residues Phe274–Leu288 traverse the membrane as a helical segment. [CaMn4O5] cluster contacts are provided by His332, Glu333, Asp342, and Ala344. A propeptide spanning residues Ala345–Gly353 is cleaved from the precursor.

This sequence belongs to the reaction center PufL/M/PsbA/D family. As to quaternary structure, PSII is composed of 1 copy each of membrane proteins PsbA, PsbB, PsbC, PsbD, PsbE, PsbF, PsbH, PsbI, PsbJ, PsbK, PsbL, PsbM, PsbT, PsbX, PsbY, PsbZ, Psb30/Ycf12, at least 3 peripheral proteins of the oxygen-evolving complex and a large number of cofactors. It forms dimeric complexes. The D1/D2 heterodimer binds P680, chlorophylls that are the primary electron donor of PSII, and subsequent electron acceptors. It shares a non-heme iron and each subunit binds pheophytin, quinone, additional chlorophylls, carotenoids and lipids. D1 provides most of the ligands for the Mn4-Ca-O5 cluster of the oxygen-evolving complex (OEC). There is also a Cl(-1) ion associated with D1 and D2, which is required for oxygen evolution. The PSII complex binds additional chlorophylls, carotenoids and specific lipids. serves as cofactor. Tyr-161 forms a radical intermediate that is referred to as redox-active TyrZ, YZ or Y-Z. Post-translationally, C-terminally processed by CTPA; processing is essential to allow assembly of the oxygen-evolving complex and thus photosynthetic growth.

The protein localises to the plastid. It is found in the chloroplast thylakoid membrane. The catalysed reaction is 2 a plastoquinone + 4 hnu + 2 H2O = 2 a plastoquinol + O2. In terms of biological role, photosystem II (PSII) is a light-driven water:plastoquinone oxidoreductase that uses light energy to abstract electrons from H(2)O, generating O(2) and a proton gradient subsequently used for ATP formation. It consists of a core antenna complex that captures photons, and an electron transfer chain that converts photonic excitation into a charge separation. The D1/D2 (PsbA/PsbD) reaction center heterodimer binds P680, the primary electron donor of PSII as well as several subsequent electron acceptors. This is Photosystem II protein D1 from Illicium oligandrum (Star anise).